The primary structure comprises 359 residues: MSWAHTPTLTQYLIEERRRYPQASGDFNALILDMARACKAIARQVAYGALAKSNHAVTTTINVQGEEQKPLDVISNECFMRLTEWGGYLAAMASEEMDEPYLIPEQYPRGRYLLLFDPLDGSSNIDVNVSVGSIFSVLRAPEGKTEITVDDFLQPGTQQVAAGYAIYGPTTMLVLTVGRGVVGFTLDPDFGEFMLTHPNIRIPESTKEFAINTSNARFWEPPVKRYVDECLKGKTGPRGKDFNMRWVASLVAETHRILSRGGVFLYPRDNKEPKKPGRLRLLYECNPIGMIVEQAGGRASTGYGPVLEVQPTELHQRIGFVFGSREEVERIEQYHNDPDASPVDLPLFAERTLFRDETL.

Glu-95, Asp-117, Leu-119, and Asp-120 together coordinate Mg(2+). Residues 120-123 (DGSS) and Asn-212 contribute to the substrate site. Position 284 (Glu-284) interacts with Mg(2+).

The protein belongs to the FBPase class 1 family. In terms of assembly, homotetramer. Requires Mg(2+) as cofactor.

It localises to the cytoplasm. It carries out the reaction beta-D-fructose 1,6-bisphosphate + H2O = beta-D-fructose 6-phosphate + phosphate. It participates in carbohydrate biosynthesis; gluconeogenesis. The chain is Fructose-1,6-bisphosphatase class 1 from Hydrogenophilus thermoluteolus (Pseudomonas hydrogenothermophila).